A 387-amino-acid chain; its full sequence is Acetylornithine aminotransferase (387 aa).

Pyridoxal 5'-phosphate contacts are provided by residues 97–98 and F130; that span reads GT. R133 contacts N(2)-acetyl-L-ornithine. 215–218 serves as a coordination point for pyridoxal 5'-phosphate; that stretch reads DEVQ. K244 is modified (N6-(pyridoxal phosphate)lysine). T273 serves as a coordination point for pyridoxal 5'-phosphate.

Belongs to the class-III pyridoxal-phosphate-dependent aminotransferase family. ArgD subfamily. As to quaternary structure, homodimer. Pyridoxal 5'-phosphate is required as a cofactor.

The protein localises to the cytoplasm. It carries out the reaction N(2)-acetyl-L-ornithine + 2-oxoglutarate = N-acetyl-L-glutamate 5-semialdehyde + L-glutamate. It participates in amino-acid biosynthesis; L-arginine biosynthesis; N(2)-acetyl-L-ornithine from L-glutamate: step 4/4. The protein is Acetylornithine aminotransferase of Clostridium acetobutylicum (strain ATCC 824 / DSM 792 / JCM 1419 / IAM 19013 / LMG 5710 / NBRC 13948 / NRRL B-527 / VKM B-1787 / 2291 / W).